The primary structure comprises 1188 residues: DNA-directed RNA polymerase subunit beta (1188 aa).

The interval 1149–1188 (ELRDLDEGEDDDVMHVDDLEKAREKQAQETPEVSENSEEK) is disordered. Over residues 1161–1175 (VMHVDDLEKAREKQA) the composition is skewed to basic and acidic residues.

Belongs to the RNA polymerase beta chain family. As to quaternary structure, the RNAP catalytic core consists of 2 alpha, 1 beta, 1 beta' and 1 omega subunit. When a sigma factor is associated with the core the holoenzyme is formed, which can initiate transcription.

The enzyme catalyses RNA(n) + a ribonucleoside 5'-triphosphate = RNA(n+1) + diphosphate. In terms of biological role, DNA-dependent RNA polymerase catalyzes the transcription of DNA into RNA using the four ribonucleoside triphosphates as substrates. The polypeptide is DNA-directed RNA polymerase subunit beta (Streptococcus uberis (strain ATCC BAA-854 / 0140J)).